The chain runs to 100 residues: MAKKSMIARDVKRKKIVERYAAKRAALMEAFNAAKDPMQRLEIHRKIQALPRNSAPNRIRNRCWATGKPRGVYRDFGLCRNQLRERAHKGELPGVVKSSW.

This sequence belongs to the universal ribosomal protein uS14 family. As to quaternary structure, part of the 30S ribosomal subunit. Contacts proteins S3 and S10.

Functionally, binds 16S rRNA, required for the assembly of 30S particles and may also be responsible for determining the conformation of the 16S rRNA at the A site. This is Small ribosomal subunit protein uS14 from Prochlorococcus marinus (strain MIT 9313).